The primary structure comprises 160 residues: Large ribosomal subunit protein eL21 (160 aa).

Belongs to the eukaryotic ribosomal protein eL21 family.

The sequence is that of Large ribosomal subunit protein eL21 (RPL21) from Encephalitozoon cuniculi (strain GB-M1) (Microsporidian parasite).